The following is a 126-amino-acid chain: Protein FMP49, mitochondrial (126 aa).

Its subcellular location is the mitochondrion. In Saccharomyces cerevisiae (strain ATCC 204508 / S288c) (Baker's yeast), this protein is Protein FMP49, mitochondrial.